Here is a 476-residue protein sequence, read N- to C-terminus: F-box protein At5g07670 (476 aa).

One can recognise an F-box domain in the interval Pro59–Leu111.

This chain is F-box protein At5g07670, found in Arabidopsis thaliana (Mouse-ear cress).